Consider the following 569-residue polypeptide: Atlastin-2 (569 aa).

An N-terminal hypervariable region (HVR) region spans residues Met-1–Pro-49. Residues Met-1–Ala-464 lie on the Cytoplasmic side of the membrane. Residues Asp-80–Asn-324 enclose the GB1/RHD3-type G domain. Arg-93, Lys-94, Gly-95, Lys-96, Ser-97, Phe-98, Gln-163, Arg-232, and Asp-233 together coordinate GDP. Residues Arg-93, Lys-94, Gly-95, Lys-96, Ser-97, and Phe-98 each contribute to the GTP site. Ser-97 lines the Mg(2+) pocket. 2 residues coordinate GTP: Arg-232 and Asp-233. Residues Leu-244–Ile-272 are a coiled coil. GDP-binding residues include Val-291 and Asn-294. Val-291 serves as a coordination point for GTP. The tract at residues Met-362–Gly-453 is 3HB (three-helix bundle) domain. The interval Lys-454–Thr-462 is linker. The helical transmembrane segment at Thr-465–Met-485 threads the bilayer. At Asn-486–Ser-487 the chain is on the lumenal side. The helical transmembrane segment at Ile-488 to Tyr-508 threads the bilayer. At Val-509–Asn-569 the chain is on the cytoplasmic side. The interval Lys-535 to Asn-569 is autoinhibitory domain.

The protein belongs to the TRAFAC class dynamin-like GTPase superfamily. GB1/RHD3 GTPase family. GB1 subfamily. Monomeric and homodimeric. The homodimer, transiently formed by two molecules on opposing membranes, is the active form mediating ER membrane fusion.

Its subcellular location is the endoplasmic reticulum membrane. It catalyses the reaction GTP + H2O = GDP + phosphate + H(+). Functionally, atlastin-2 (ATL2) is a membrane-anchored GTPase that mediates the GTP-dependent fusion of endoplasmic reticulum (ER) membranes, maintaining the continuous ER network. It facilitates the formation of three-way junctions where ER tubules intersect. Two atlastin-2 on neighboring ER tubules bind GTP and form loose homodimers through the GB1/RHD3-type G domains and 3HB regions. Upon GTP hydrolysis, the 3HB regions tighten, pulling the membranes together to drive their fusion. After fusion, the homodimer disassembles upon release of inorganic phosphate (Pi). Subsequently, GDP dissociates, resetting the monomers to a conformation ready for a new fusion cycle. The sequence is that of Atlastin-2 (atl2) from Xenopus laevis (African clawed frog).